Reading from the N-terminus, the 838-residue chain is Alpha-glucan phosphorylase, H isozyme (838 aa).

Positions 1-21 (MEGGAKSNDVSAAPIAQPLSE) are disordered. Residue Lys684 is modified to N6-(pyridoxal phosphate)lysine.

The protein belongs to the glycogen phosphorylase family. It depends on pyridoxal 5'-phosphate as a cofactor.

The protein resides in the cytoplasm. It catalyses the reaction [(1-&gt;4)-alpha-D-glucosyl](n) + phosphate = [(1-&gt;4)-alpha-D-glucosyl](n-1) + alpha-D-glucose 1-phosphate. In terms of biological role, phosphorylase is an important allosteric enzyme in carbohydrate metabolism. Enzymes from different sources differ in their regulatory mechanisms and in their natural substrates. However, all known phosphorylases share catalytic and structural properties. In Solanum tuberosum (Potato), this protein is Alpha-glucan phosphorylase, H isozyme.